A 142-amino-acid chain; its full sequence is MAKKIESYIKLQVAAQEANPSPPVGPALGQHGVNIMEFCKAFNSKTQEINKGMKVPVVITVYSDRSFSFVTKTPPAALLILKIIDIKKGSGSPHLDKVGSITRAQLEEVASMKMKDLNANNMDSAVNIIAGTARSMGIMVEG.

Belongs to the universal ribosomal protein uL11 family. As to quaternary structure, part of the ribosomal stalk of the 50S ribosomal subunit. Interacts with L10 and the large rRNA to form the base of the stalk. L10 forms an elongated spine to which L12 dimers bind in a sequential fashion forming a multimeric L10(L12)X complex. One or more lysine residues are methylated.

Its function is as follows. Forms part of the ribosomal stalk which helps the ribosome interact with GTP-bound translation factors. This Vesicomyosocius okutanii subsp. Calyptogena okutanii (strain HA) protein is Large ribosomal subunit protein uL11.